The following is a 193-amino-acid chain: Ion-translocating oxidoreductase complex subunit B (193 aa).

Residues 1 to 26 (MSTMLIAVILLTLLALFFGVLLGFAA) form a hydrophobic region. The 4Fe-4S domain occupies 32-90 (EGNPIVDELEAILPQTQCGQCGYPGCRPYAEAIANGDKVNKCPPGGTATMEKLANLMGV). Positions 49, 52, 57, 73, 114, 117, 120, 124, 144, 147, 150, and 154 each coordinate [4Fe-4S] cluster. 4Fe-4S ferredoxin-type domains lie at 105-134 (KVAY…GAGK) and 136-164 (MHTV…MIPV).

The protein belongs to the 4Fe4S bacterial-type ferredoxin family. RnfB subfamily. In terms of assembly, the complex is composed of six subunits: RnfA, RnfB, RnfC, RnfD, RnfE and RnfG. [4Fe-4S] cluster serves as cofactor.

The protein resides in the cell inner membrane. Its function is as follows. Part of a membrane-bound complex that couples electron transfer with translocation of ions across the membrane. This Shewanella sp. (strain ANA-3) protein is Ion-translocating oxidoreductase complex subunit B.